We begin with the raw amino-acid sequence, 232 residues long: Large ribosomal subunit protein uL1 (232 aa).

This sequence belongs to the universal ribosomal protein uL1 family. Part of the 50S ribosomal subunit.

In terms of biological role, binds directly to 23S rRNA. The L1 stalk is quite mobile in the ribosome, and is involved in E site tRNA release. Its function is as follows. Protein L1 is also a translational repressor protein, it controls the translation of the L11 operon by binding to its mRNA. The protein is Large ribosomal subunit protein uL1 of Rhizobium rhizogenes (strain K84 / ATCC BAA-868) (Agrobacterium radiobacter).